The primary structure comprises 344 residues: Adenosine kinase 1 (344 aa).

Residue Asp-299 is part of the active site.

It belongs to the carbohydrate kinase PfkB family. As to quaternary structure, interacts with the begomovirus AL2 protein and the curtovirus L2 protein. It depends on Mg(2+) as a cofactor. Widely expressed.

The catalysed reaction is adenosine + ATP = AMP + ADP + H(+). It functions in the pathway purine metabolism; AMP biosynthesis via salvage pathway; AMP from adenosine: step 1/1. With respect to regulation, inactivated by the begomovirus AL2 protein or the curtovirus L2 protein. In terms of biological role, ATP dependent phosphorylation of adenosine and other related nucleoside analogs to monophosphate derivatives. Essential to sustain methyl recycling. In Arabidopsis thaliana (Mouse-ear cress), this protein is Adenosine kinase 1.